We begin with the raw amino-acid sequence, 145 residues long: Deoxyuridine 5'-triphosphate nucleotidohydrolase (145 aa).

Residues 65–67, N78, 82–84, and M92 contribute to the substrate site; these read RSG and TID.

It belongs to the dUTPase family. Requires Mg(2+) as cofactor.

The enzyme catalyses dUTP + H2O = dUMP + diphosphate + H(+). The protein operates within pyrimidine metabolism; dUMP biosynthesis; dUMP from dCTP (dUTP route): step 2/2. This enzyme is involved in nucleotide metabolism: it produces dUMP, the immediate precursor of thymidine nucleotides and it decreases the intracellular concentration of dUTP so that uracil cannot be incorporated into DNA. This chain is Deoxyuridine 5'-triphosphate nucleotidohydrolase, found in Chlorobium phaeobacteroides (strain BS1).